The sequence spans 601 residues: Glutathione-regulated potassium-efflux system protein KefB (601 aa).

Transmembrane regions (helical) follow at residues 4–24 (ADLLTAGVLFLFAAVAAVPLA), 29–49 (IGAVLGYLLAGIAIGPWGLGF), 55–75 (EILHFSELGVVFLMFIIGLEL), 87–107 (IFGVGAAQVLLSAAVLAGLLM), 111–131 (FLWQAAVVGGIGLAMSSTAMA), 152–172 (VLLFQDLAVIPALALVPLLAG), 177–197 (HFDWFKVAMKVLAFAVMLIGG), 207–227 (FIAASGVREVFTAATLLLVLS), 230–250 (LFMDALGLSMALGTFIAGVLL), 262–282 (AIDPFKGLLLGLFFISVGMSL), 284–304 (LGVLYTHLLWVAASVVILVVI), 324–344 (MQFASVLSQGGEFAFVLFSTA), and 356–376 (ALLLVTVTLSMMTTPLLMKGI). Residues 400 to 519 (KPQVIVVGFG…AGVTQFSRET (120 aa)) form the RCK N-terminal domain.

It belongs to the monovalent cation:proton antiporter 2 (CPA2) transporter (TC 2.A.37) family. KefB subfamily. As to quaternary structure, interacts with the regulatory subunit KefG.

It is found in the cell inner membrane. Functionally, pore-forming subunit of a potassium efflux system that confers protection against electrophiles. Catalyzes K(+)/H(+) antiport. The protein is Glutathione-regulated potassium-efflux system protein KefB of Salmonella heidelberg (strain SL476).